The chain runs to 599 residues: Sulfite reductase [NADPH] flavoprotein alpha-component (599 aa).

Residues 64-202 (ITIISASQTG…AASEWRARVV (139 aa)) form the Flavodoxin-like domain. FMN-binding positions include 70–75 (SQTGNA), 117–120 (STQG), and 153–162 (LGDSSYEFFC). The region spanning 234 to 448 (DAPLVASLSV…IEHNDNFRLP (215 aa)) is the FAD-binding FR-type domain. FAD-binding positions include T322, A356, 386-389 (RLYS), 404-406 (TVG), Y410, and 419-422 (GGAS). NADP(+) contacts are provided by residues 519–520 (SR), 525–529 (KVYVQ), and D561. Residue Y599 coordinates FAD.

This sequence belongs to the NADPH-dependent sulphite reductase flavoprotein subunit CysJ family. In the N-terminal section; belongs to the flavodoxin family. The protein in the C-terminal section; belongs to the flavoprotein pyridine nucleotide cytochrome reductase family. As to quaternary structure, alpha(8)-beta(8). The alpha component is a flavoprotein, the beta component is a hemoprotein. FAD serves as cofactor. The cofactor is FMN.

It carries out the reaction hydrogen sulfide + 3 NADP(+) + 3 H2O = sulfite + 3 NADPH + 4 H(+). The protein operates within sulfur metabolism; hydrogen sulfide biosynthesis; hydrogen sulfide from sulfite (NADPH route): step 1/1. Component of the sulfite reductase complex that catalyzes the 6-electron reduction of sulfite to sulfide. This is one of several activities required for the biosynthesis of L-cysteine from sulfate. The flavoprotein component catalyzes the electron flow from NADPH -&gt; FAD -&gt; FMN to the hemoprotein component. The polypeptide is Sulfite reductase [NADPH] flavoprotein alpha-component (Shigella flexneri serotype 5b (strain 8401)).